The sequence spans 589 residues: O-fucosyltransferase 11 (589 aa).

The tract at residues 1-37 (MKSKIHHQPNGSNNGVVSSNDNGCRSESPSPPLSPNR) is disordered. The span at 10–23 (NGSNNGVVSSNDNG) shows a compositional bias: low complexity. The helical; Signal-anchor for type II membrane protein transmembrane segment at 68-88 (MIYASGLLMCVGPFSGLVGWV) threads the bilayer. N-linked (GlcNAc...) asparagine glycosylation is found at Asn112, Asn136, and Asn239. 332–334 (HLR) is a substrate binding site. Residues Asn405, Asn406, and Asn564 are each glycosylated (N-linked (GlcNAc...) asparagine).

The protein belongs to the glycosyltransferase GT106 family.

Its subcellular location is the membrane. The protein operates within glycan metabolism. In Arabidopsis thaliana (Mouse-ear cress), this protein is O-fucosyltransferase 11.